Consider the following 122-residue polypeptide: MIQMQTNLDVADNSGARRVMCIKVIGGSKRRYATVGDVIVVSIKEAIPRGKVKKGDVMKAVVVRVRKDIRRADGSVIRFDRNAAVLINNQSEPIGTRIFGPVPRELRAKNHMKIISLAPEVL.

In terms of assembly, forms a cluster with proteins L3 and L19. In the 70S ribosome, L14 and L19 interact and together make contacts with the 16S rRNA in bridges B5 and B8. Part of the 50S ribosomal subunit.

Its function is as follows. Binds to 23S rRNA. Forms part of two intersubunit bridges in the 70S ribosome. The chain is Large ribosomal subunit protein uL14 from Rhodopseudomonas palustris (strain ATCC BAA-98 / CGA009).